Consider the following 827-residue polypeptide: Periplasmic nitrate reductase (827 aa).

Residues 1-34 (MSLTRRDFIKANAVAATAAAAGIATPAIAQPAKA) constitute a signal peptide (tat-type signal). Residues 36 to 92 (IRWDKGVCRFCGTGCAVLVGVQDGRVVATQGDPDSPVNRGLNCIKGYFLSKIMYGED) enclose the 4Fe-4S Mo/W bis-MGD-type domain. The [4Fe-4S] cluster site is built by C43, C46, C50, and C78. Residues K80, Q148, N173, C177, 210-217 (WGSNMAEM), 241-245 (STFEH), 260-262 (QTD), M371, Q375, N481, 507-508 (SD), K530, D557, and 717-726 (TGRVLEHWHS) each bind Mo-bis(molybdopterin guanine dinucleotide). Residue F793 coordinates substrate. The Mo-bis(molybdopterin guanine dinucleotide) site is built by N801 and K818.

This sequence belongs to the prokaryotic molybdopterin-containing oxidoreductase family. NasA/NapA/NarB subfamily. In terms of assembly, component of the periplasmic nitrate reductase NapAB complex composed of NapA and NapB. The cofactor is [4Fe-4S] cluster. Mo-bis(molybdopterin guanine dinucleotide) is required as a cofactor. Post-translationally, predicted to be exported by the Tat system. The position of the signal peptide cleavage has not been experimentally proven.

It localises to the periplasm. The catalysed reaction is 2 Fe(II)-[cytochrome] + nitrate + 2 H(+) = 2 Fe(III)-[cytochrome] + nitrite + H2O. In terms of biological role, catalytic subunit of the periplasmic nitrate reductase complex NapAB. Receives electrons from NapB and catalyzes the reduction of nitrate to nitrite. This is Periplasmic nitrate reductase from Paramagnetospirillum magneticum (strain ATCC 700264 / AMB-1) (Magnetospirillum magneticum).